The following is a 506-amino-acid chain: Glutamate--tRNA ligase (506 aa).

Positions 21–31 match the 'HIGH' region motif; it reads PSPTGIPHVGM. The 'KMSKS' region signature appears at 265 to 269; that stretch reads KLSKR. Lysine 268 contacts ATP.

Belongs to the class-I aminoacyl-tRNA synthetase family. Glutamate--tRNA ligase type 1 subfamily. As to quaternary structure, monomer.

It is found in the cytoplasm. The catalysed reaction is tRNA(Glu) + L-glutamate + ATP = L-glutamyl-tRNA(Glu) + AMP + diphosphate. Catalyzes the attachment of glutamate to tRNA(Glu) in a two-step reaction: glutamate is first activated by ATP to form Glu-AMP and then transferred to the acceptor end of tRNA(Glu). In Bifidobacterium adolescentis (strain ATCC 15703 / DSM 20083 / NCTC 11814 / E194a), this protein is Glutamate--tRNA ligase.